The primary structure comprises 420 residues: Serine hydroxymethyltransferase (420 aa).

Residues Leu121 and 125–127 (GHL) contribute to the (6S)-5,6,7,8-tetrahydrofolate site. Lys230 is modified (N6-(pyridoxal phosphate)lysine). Residues Glu246 and 354 to 356 (SPF) contribute to the (6S)-5,6,7,8-tetrahydrofolate site.

The protein belongs to the SHMT family. Homodimer. Pyridoxal 5'-phosphate serves as cofactor.

It is found in the cytoplasm. It carries out the reaction (6R)-5,10-methylene-5,6,7,8-tetrahydrofolate + glycine + H2O = (6S)-5,6,7,8-tetrahydrofolate + L-serine. It functions in the pathway one-carbon metabolism; tetrahydrofolate interconversion. The protein operates within amino-acid biosynthesis; glycine biosynthesis; glycine from L-serine: step 1/1. Functionally, catalyzes the reversible interconversion of serine and glycine with tetrahydrofolate (THF) serving as the one-carbon carrier. This reaction serves as the major source of one-carbon groups required for the biosynthesis of purines, thymidylate, methionine, and other important biomolecules. Also exhibits THF-independent aldolase activity toward beta-hydroxyamino acids, producing glycine and aldehydes, via a retro-aldol mechanism. The sequence is that of Serine hydroxymethyltransferase from Rickettsia akari (strain Hartford).